Consider the following 126-residue polypeptide: RutC family protein bbp_334 (126 aa).

It belongs to the RutC family.

The protein is RutC family protein bbp_334 of Buchnera aphidicola subsp. Baizongia pistaciae (strain Bp).